Here is a 565-residue protein sequence, read N- to C-terminus: Oxygen-dependent choline dehydrogenase (565 aa).

6–35 (DYIIVGAGSAGNTLATRLTEDAGVTVLLLE) provides a ligand contact to FAD. Residue His475 is the Proton acceptor of the active site.

The protein belongs to the GMC oxidoreductase family. Requires FAD as cofactor.

The catalysed reaction is choline + A = betaine aldehyde + AH2. It catalyses the reaction betaine aldehyde + NAD(+) + H2O = glycine betaine + NADH + 2 H(+). Its pathway is amine and polyamine biosynthesis; betaine biosynthesis via choline pathway; betaine aldehyde from choline (cytochrome c reductase route): step 1/1. Its function is as follows. Involved in the biosynthesis of the osmoprotectant glycine betaine. Catalyzes the oxidation of choline to betaine aldehyde and betaine aldehyde to glycine betaine at the same rate. This Pseudomonas putida (strain GB-1) protein is Oxygen-dependent choline dehydrogenase.